The chain runs to 338 residues: MTRF1L release factor glutamine methyltransferase (338 aa).

S-adenosyl-L-methionine-binding positions include glycine 167–glycine 171, aspartate 190, tryptophan 225, and asparagine 239. Residue asparagine 239–tyrosine 242 participates in substrate binding.

This sequence belongs to the protein N5-glutamine methyltransferase family.

It localises to the mitochondrion. It carries out the reaction L-glutaminyl-[peptide chain release factor] + S-adenosyl-L-methionine = N(5)-methyl-L-glutaminyl-[peptide chain release factor] + S-adenosyl-L-homocysteine + H(+). Its function is as follows. N5-glutamine methyltransferase responsible for the methylation of the glutamine residue in the universally conserved GGQ motif of the mitochondrial translation release factors MTRF1, MTRF1L, MRPL58/ICT1 and MTRFR. The chain is MTRF1L release factor glutamine methyltransferase (HEMK1) from Homo sapiens (Human).